A 475-amino-acid chain; its full sequence is Aspartyl/glutamyl-tRNA(Asn/Gln) amidotransferase subunit B (475 aa).

It belongs to the GatB/GatE family. GatB subfamily. In terms of assembly, heterotrimer of A, B and C subunits.

The catalysed reaction is L-glutamyl-tRNA(Gln) + L-glutamine + ATP + H2O = L-glutaminyl-tRNA(Gln) + L-glutamate + ADP + phosphate + H(+). It catalyses the reaction L-aspartyl-tRNA(Asn) + L-glutamine + ATP + H2O = L-asparaginyl-tRNA(Asn) + L-glutamate + ADP + phosphate + 2 H(+). Allows the formation of correctly charged Asn-tRNA(Asn) or Gln-tRNA(Gln) through the transamidation of misacylated Asp-tRNA(Asn) or Glu-tRNA(Gln) in organisms which lack either or both of asparaginyl-tRNA or glutaminyl-tRNA synthetases. The reaction takes place in the presence of glutamine and ATP through an activated phospho-Asp-tRNA(Asn) or phospho-Glu-tRNA(Gln). The polypeptide is Aspartyl/glutamyl-tRNA(Asn/Gln) amidotransferase subunit B (Staphylococcus aureus (strain COL)).